A 484-amino-acid chain; its full sequence is HSPB1-associated protein 1 (484 aa).

The disordered stretch occupies residues 1–26 (MAARPGAITNADSASGGGEEEGKHVK). Positions 88–208 (ETACNYVEAT…EDTPFLYPTR (121 aa)) are interaction with HSPB1. Residues 124 to 288 (WAYADYKYFV…HQTRVEEAIT (165 aa)) form the JmjC domain. Residues 396-429 (TPSSEEPSSERGGIFENDGEDFVSKNGKSFGKRQ) are disordered.

As to quaternary structure, interacts with CRYAB and HSPB1.

Its subcellular location is the cytoplasm. May play a role in cellular stress response. The chain is HSPB1-associated protein 1 (HSPBAP1) from Bos taurus (Bovine).